Reading from the N-terminus, the 307-residue chain is MRELVLNCREAQADALSDALLEAGVLSVSVEDADLGTEAERPLFGEPGTEPQVQAWERNCVVALLPGGADPAQILEQAIAAAGLDPALAHGWSLREVPDADWVRLTQSQFGPIPISERLWIVPSWHRDDPAVPGLAPDAARDAIHIELDPGLAFGTGSHPTTHLCLAWLEAELPAGARLLDYGCGSGILAIAARKLGAGETVAVDIDPQAVQSTVDNAEVNQVRLQAMLPDALPAGEFQVVVANILSNPLKVLAPMLAGRVAPGGHLVLSGVLERQADEVAAAYAPWLTMSVWRERDGWVCLHGVKA.

Residues threonine 162, glycine 183, aspartate 205, and asparagine 244 each contribute to the S-adenosyl-L-methionine site.

It belongs to the methyltransferase superfamily. PrmA family.

It localises to the cytoplasm. The catalysed reaction is L-lysyl-[protein] + 3 S-adenosyl-L-methionine = N(6),N(6),N(6)-trimethyl-L-lysyl-[protein] + 3 S-adenosyl-L-homocysteine + 3 H(+). Its function is as follows. Methylates ribosomal protein L11. This chain is Ribosomal protein L11 methyltransferase, found in Bordetella parapertussis (strain 12822 / ATCC BAA-587 / NCTC 13253).